The primary structure comprises 488 residues: Glutamyl-tRNA(Gln) amidotransferase subunit A (488 aa).

Active-site charge relay system residues include Lys-77 and Ser-152. Ser-176 functions as the Acyl-ester intermediate in the catalytic mechanism.

Belongs to the amidase family. GatA subfamily. As to quaternary structure, heterotrimer of A, B and C subunits.

It catalyses the reaction L-glutamyl-tRNA(Gln) + L-glutamine + ATP + H2O = L-glutaminyl-tRNA(Gln) + L-glutamate + ADP + phosphate + H(+). Functionally, allows the formation of correctly charged Gln-tRNA(Gln) through the transamidation of misacylated Glu-tRNA(Gln) in organisms which lack glutaminyl-tRNA synthetase. The reaction takes place in the presence of glutamine and ATP through an activated gamma-phospho-Glu-tRNA(Gln). This Latilactobacillus sakei subsp. sakei (strain 23K) (Lactobacillus sakei subsp. sakei) protein is Glutamyl-tRNA(Gln) amidotransferase subunit A.